The primary structure comprises 574 residues: Streptolysin O (574 aa).

The N-terminal stretch at 1 to 36 (MKDMSNKKIFKKYSRVAGLLTAALIVGNLVTANADS) is a signal peptide. A compositionally biased stretch (low complexity) spans 37-52 (NKQNTANTETTTTNEQ). Disordered stretches follow at residues 37 to 64 (NKQNTANTETTTTNEQPKPESSELTTEK) and 84 to 111 (KEMPLESAEKEEKKSEDNKKSEEDHTEE). The segment covering 53 to 64 (PKPESSELTTEK) has biased composition (basic and acidic residues). A run of 4 beta stranded transmembrane segments spans residues 263 to 276 (KSQIEAALNVNSKI), 283 to 292 (IDFKSISKGE), 361 to 370 (SNDVEAAFSA), and 378 to 390 (KTNGKYSDILENS). The short motif at 532–542 (ECTGLAWEWWR) is the Conserved undecapeptide element. The Cholesterol binding signature appears at 564–565 (TL).

The protein belongs to the cholesterol-dependent cytolysin family. As to quaternary structure, homooligomeric pore complex of 35 to 50 subunits; when inserted in the host membrane.

It is found in the secreted. The protein resides in the host cell membrane. A cholesterol-dependent toxin that causes cytolysis by forming pores in cholesterol containing host membranes. After binding to target membranes, the protein undergoes a major conformation change, leading to its insertion in the host membrane and formation of an oligomeric pore complex. Cholesterol is required for binding to host membranes, membrane insertion and pore formation; cholesterol binding is mediated by a Thr-Leu pair in the C-terminus. Can be reversibly inactivated by oxidation. The chain is Streptolysin O (slo) from Streptococcus dysgalactiae subsp. equisimilis (Streptococcus equisimilis).